A 68-amino-acid chain; its full sequence is UPF0291 protein TTE2340 (68 aa).

Belongs to the UPF0291 family.

It is found in the cytoplasm. This is UPF0291 protein TTE2340 from Caldanaerobacter subterraneus subsp. tengcongensis (strain DSM 15242 / JCM 11007 / NBRC 100824 / MB4) (Thermoanaerobacter tengcongensis).